A 66-amino-acid polypeptide reads, in one-letter code: Ocellatin-PT3 (66 aa).

An N-terminal signal peptide occupies residues 1 to 22; the sequence is MAFLKKSLFLVLFLGLVSLSIC. Positions 23–39 are excised as a propeptide; the sequence is DEEKRQDEDDDDDDDEE. Residue Val-66 is modified to Valine amide.

In terms of tissue distribution, expressed by the skin glands.

It localises to the secreted. In terms of biological role, has antibacterial activity against Gram-negative bacterium E.coli ATCC 25922 (MIC=320 uM) but not against S.pneumoniae ATCC 700603, S.choleraesuis ATCC 14028 or Gram-positive bacterium S.aureus ATCC 29313. Shows no hemolytic activity and no cytotoxicity. The polypeptide is Ocellatin-PT3 (Leptodactylus pustulatus (Ceara white-lipped frog)).